The primary structure comprises 150 residues: Large ribosomal subunit protein bL9 (150 aa).

The protein belongs to the bacterial ribosomal protein bL9 family.

Binds to the 23S rRNA. The chain is Large ribosomal subunit protein bL9 from Pseudoalteromonas translucida (strain TAC 125).